The chain runs to 206 residues: MEKLTKRQQDILDFIKLKVQEKGYPPSVREIGQAVGLASSSTVHGHLSRLEEKGYIRRDPTKPRAIEILGEERIEISTQSVVQVPIVGKVTAGLPITAVESVEEHFPLPASIIAGADQVFMLRISGDSMIEAGIFDGDLVVVRQQHSANNGEIVVALTEDNEATVKRFYKEKDHFRLQPENSSLEPIILNTVSVIGKVIGVYRDLH.

Residues 28–48 constitute a DNA-binding region (H-T-H motif); sequence VREIGQAVGLASSSTVHGHLS. Active-site for autocatalytic cleavage activity residues include Ser-128 and Lys-166.

The protein belongs to the peptidase S24 family. As to quaternary structure, homodimer.

The enzyme catalyses Hydrolysis of Ala-|-Gly bond in repressor LexA.. Functionally, represses a number of genes involved in the response to DNA damage (SOS response), including recA and lexA. In the presence of single-stranded DNA, RecA interacts with LexA causing an autocatalytic cleavage which disrupts the DNA-binding part of LexA, leading to derepression of the SOS regulon and eventually DNA repair. The polypeptide is LexA repressor (Bacillus cytotoxicus (strain DSM 22905 / CIP 110041 / 391-98 / NVH 391-98)).